A 190-amino-acid polypeptide reads, in one-letter code: Peptidyl-tRNA hydrolase (190 aa).

Y18 is a binding site for tRNA. The active-site Proton acceptor is H23. Positions 69, 71, and 117 each coordinate tRNA.

It belongs to the PTH family. Monomer.

The protein resides in the cytoplasm. The catalysed reaction is an N-acyl-L-alpha-aminoacyl-tRNA + H2O = an N-acyl-L-amino acid + a tRNA + H(+). Functionally, hydrolyzes ribosome-free peptidyl-tRNAs (with 1 or more amino acids incorporated), which drop off the ribosome during protein synthesis, or as a result of ribosome stalling. In terms of biological role, catalyzes the release of premature peptidyl moieties from peptidyl-tRNA molecules trapped in stalled 50S ribosomal subunits, and thus maintains levels of free tRNAs and 50S ribosomes. This Rhodococcus opacus (strain B4) protein is Peptidyl-tRNA hydrolase.